The chain runs to 91 residues: Long neurotoxin LNTX28 (91 aa).

A signal peptide spans 1–21; the sequence is MKTLLLTLVVMTIVCLDLGYT. Disulfide bonds link C24/C41, C34/C62, C47/C51, C66/C77, and C78/C83.

It belongs to the three-finger toxin family. Long-chain subfamily. Type II alpha-neurotoxin sub-subfamily. Expressed by the venom gland.

It localises to the secreted. Functionally, binds with high affinity to muscular (alpha-1/CHRNA1) and neuronal (alpha-7/CHRNA7) nicotinic acetylcholine receptor (nAChR) and inhibits acetylcholine from binding to the receptor, thereby impairing neuromuscular and neuronal transmission. The protein is Long neurotoxin LNTX28 of Ophiophagus hannah (King cobra).